The primary structure comprises 402 residues: Nuclear hormone receptor family member nhr-96 (402 aa).

Residues 4–79 (FGLCAVCGQV…VGMDVKKIQQ (76 aa)) constitute a DNA-binding region (nuclear receptor). 2 consecutive NR C4-type zinc fingers follow at residues 7 to 27 (CAVCGQVTTGKNFGVISCRSC) and 44 to 67 (CVKASCAIFENGKFKCKKCRLKRC). The region spanning 154–402 (NYYNSLELLT…FSDPEMFELT (249 aa)) is the NR LBD domain.

This sequence belongs to the nuclear hormone receptor family.

It is found in the nucleus. Its function is as follows. Orphan nuclear receptor. The polypeptide is Nuclear hormone receptor family member nhr-96 (nhr-96) (Caenorhabditis elegans).